The chain runs to 264 residues: ORC1-type DNA replication protein 2 (264 aa).

Residues 73–77 (TGKSL), Y220, and R232 each bind ATP.

It belongs to the CDC6/cdc18 family.

Its function is as follows. Involved in regulation of DNA replication. This Halobacterium salinarum (strain ATCC 700922 / JCM 11081 / NRC-1) (Halobacterium halobium) protein is ORC1-type DNA replication protein 2 (orc2).